We begin with the raw amino-acid sequence, 647 residues long: Zinc transporter ZIP4 (647 aa).

A signal peptide spans 1–22 (MASLVSLELGLLLAVLVVTATA). The Extracellular portion of the chain corresponds to 23–327 (SPPAGLLSLL…QDQLSQSERY (305 aa)). 3 disulfide bridges follow: cysteine 57/cysteine 62, cysteine 65/cysteine 111, and cysteine 160/cysteine 195. The tract at residues 236-255 (EAHSDHSHRHRGASSRDPVP) is disordered. The N-linked (GlcNAc...) asparagine glycan is linked to asparagine 261. Cysteines 270 and 309 form a disulfide. A helical transmembrane segment spans residues 328-348 (LYGSLATLLICLCAVFGLLLL). Residues 349-359 (TCTGCRGVTHY) are Cytoplasmic-facing. The helical transmembrane segment at 360–380 (ILQTFLSLAVGAVTGDAVLHL) threads the bilayer. The Extracellular segment spans residues 381 to 402 (TPKVLGLHTHSEEGLSPQPTWR). A helical transmembrane segment spans residues 403 to 423 (LLAMLAGLYAFFLFENLFNLL). At 424-498 (LPRDPEDLED…LSPELRLLPY (75 aa)) the chain is on the cytoplasmic side. Residues 452 to 454 (LQL) carry the Essential for SLC39A4 endocytosis motif. Positions 458-484 (ELRQPKPPHEGSRADLVAEESPELLNP) are disordered. Residues 460–470 (RQPKPPHEGSR) are compositionally biased toward basic and acidic residues. The helical transmembrane segment at 499 to 518 (MITLGDAVHNFADGLAVGAA) threads the bilayer. 3 residues coordinate Zn(2+): histidine 507, asparagine 508, and aspartate 511. At 519 to 526 (FASSWKTG) the chain is on the extracellular side. A helical transmembrane segment spans residues 527–553 (LATSLAVFCHELPHELGDFAALLHAGL). Zn(2+) contacts are provided by histidine 536, glutamate 537, and histidine 540. Over 554 to 558 (SVRQA) the chain is Cytoplasmic. The helical transmembrane segment at 559 to 579 (LLLNLASALTAFAGLYVALAV) threads the bilayer. Residues 580 to 586 (GVSEESE) lie on the Extracellular side of the membrane. A helical membrane pass occupies residues 587–607 (AWILAVATGLFLYVALCDMLP). Over 608–617 (AMLKVRDPRP) the chain is Cytoplasmic. A helical membrane pass occupies residues 618–638 (WLLFLLHNVGLLGGWTVLLLL). At 639–647 (SLYEDDITF) the chain is on the extracellular side.

This sequence belongs to the ZIP transporter (TC 2.A.5) family. In terms of assembly, homodimer; homodimerization is mediated by the transmembrane domain. In terms of processing, the extracellular N-terminal ectodomain is cleaved when cells are Zn(2+) deficient, N-terminally cleaved SLC39A4 is internalized at a faster rate. Under excess Zn(2+) conditions, SLC39A4 on the cell surface is rapidly endocytosed, ubiquitinated and degraded. Post-translationally, glycosylated. In terms of tissue distribution, highly expressed in kidney, small intestine, stomach, colon, jejunum and duodenum.

It localises to the cell membrane. The protein localises to the recycling endosome membrane. It is found in the apical cell membrane. It catalyses the reaction Zn(2+)(in) = Zn(2+)(out). The Zn(2+) uniporter activity is regulated by zinc availability. Extracellular acidification stimulated SLC39A4-dependent Zn(2+) uptake. Its function is as follows. Selective transporter that mediates the uptake of Zn(2+). Plays an essential role for dietary zinc uptake from small intestine. The Zn(2+) uniporter activity is regulated by zinc availability. Also exhibits polyspecific binding and transport of Cu(2+), Cd(2+) and possibly Ni(2+) but at higher concentrations. In Homo sapiens (Human), this protein is Zinc transporter ZIP4.